The primary structure comprises 363 residues: Probable dual-specificity RNA methyltransferase RlmN (363 aa).

The active-site Proton acceptor is the E106. One can recognise a Radical SAM core domain in the interval H112 to D345. C119 and C350 form a disulfide bridge. The [4Fe-4S] cluster site is built by C126, C130, and C133. S-adenosyl-L-methionine is bound by residues G176–E177, S208, S231–H233, and N307. The active-site S-methylcysteine intermediate is C350.

It belongs to the radical SAM superfamily. RlmN family. The cofactor is [4Fe-4S] cluster.

It is found in the cytoplasm. The catalysed reaction is adenosine(2503) in 23S rRNA + 2 reduced [2Fe-2S]-[ferredoxin] + 2 S-adenosyl-L-methionine = 2-methyladenosine(2503) in 23S rRNA + 5'-deoxyadenosine + L-methionine + 2 oxidized [2Fe-2S]-[ferredoxin] + S-adenosyl-L-homocysteine. It carries out the reaction adenosine(37) in tRNA + 2 reduced [2Fe-2S]-[ferredoxin] + 2 S-adenosyl-L-methionine = 2-methyladenosine(37) in tRNA + 5'-deoxyadenosine + L-methionine + 2 oxidized [2Fe-2S]-[ferredoxin] + S-adenosyl-L-homocysteine. Specifically methylates position 2 of adenine 2503 in 23S rRNA and position 2 of adenine 37 in tRNAs. In Bacillus velezensis (strain DSM 23117 / BGSC 10A6 / LMG 26770 / FZB42) (Bacillus amyloliquefaciens subsp. plantarum), this protein is Probable dual-specificity RNA methyltransferase RlmN.